The sequence spans 461 residues: Cysteine--tRNA ligase (461 aa).

Residue Cys-27 participates in Zn(2+) binding. A 'HIGH' region motif is present at residues 29–39 (ITVYDYCHIGH). Zn(2+) contacts are provided by Cys-208, His-233, and Glu-237. A 'KMSKS' region motif is present at residues 265–269 (KMSKS). Lys-268 lines the ATP pocket.

This sequence belongs to the class-I aminoacyl-tRNA synthetase family. In terms of assembly, monomer. Zn(2+) serves as cofactor.

The protein resides in the cytoplasm. It carries out the reaction tRNA(Cys) + L-cysteine + ATP = L-cysteinyl-tRNA(Cys) + AMP + diphosphate. The polypeptide is Cysteine--tRNA ligase (Chromohalobacter salexigens (strain ATCC BAA-138 / DSM 3043 / CIP 106854 / NCIMB 13768 / 1H11)).